The primary structure comprises 2410 residues: Reducing polyketide synthase FUB1 (2410 aa).

The span at 1–42 shows a compositional bias: low complexity; it reads MTLSNGSNGANGTSNGNGAHPSANGFHNAANGGANNGSANGG. Positions 1 to 52 are disordered; the sequence is MTLSNGSNGANGTSNGNGAHPSANGFHNAANGGANNGSANGGAEHDAGRPQV. The Ketosynthase family 3 (KS3) domain maps to 57 to 479; the sequence is SSAIAVIGVS…GANAHAVLDD (423 aa). Catalysis depends on for beta-ketoacyl synthase activity residues cysteine 230, histidine 365, and histidine 403. A malonyl-CoA:ACP transacylase (MAT) domain region spans residues 608–929; it reads TFIFTGQGAQ…FSAIKRKQDA (322 aa). The active-site For malonyltransferase activity is the serine 699. The N-terminal hotdog fold stretch occupies residues 994–1127; sequence LELLGVRDPR…GLVSTSYKHD (134 aa). Positions 994–1307 constitute a PKS/mFAS DH domain; the sequence is LELLGVRDPR…TVPLRGASDS (314 aa). The dehydratase (DH) domain stretch occupies residues 995–1302; sequence ELLGVRDPRS…LKGCKTVPLR (308 aa). The active-site Proton acceptor; for dehydratase activity is histidine 1026. Residues 1155 to 1307 form a C-terminal hotdog fold region; it reads LPSVDPTVFY…TVPLRGASDS (153 aa). The Proton donor; for dehydratase activity role is filled by aspartate 1220. Positions 1714–2026 are enoyl reductase (ER) domain; sequence GLLDTLEYLS…SGGHVGKIVL (313 aa). The interval 2050–2226 is ketoreductase (KR) domain; that stretch reads ATYVLIGGLG…AATSINLSLV (177 aa). Residues 2329-2406 form the Carrier domain; it reads EVYEIVLQQL…GFTKKVMAKS (78 aa). Serine 2366 carries the post-translational modification O-(pantetheine 4'-phosphoryl)serine.

Its pathway is mycotoxin biosynthesis. Its function is as follows. Reducing polyketide synthase; part of the gene cluster that mediates the biosynthesis of fusaric acid, a mycotoxin with low to moderate toxicity to animals and humans, but with high phytotoxic properties. L-aspartate is suggested as fusaric acid amino acid precursor that is activated and further processed to O-acetyl-L-homoserine by cluster enzymes aspartate kinase FUB3 and homoserine O-acetyltransferase FUB5, as well as enzymes of the primary metabolism. The polyketide synthase (PKS) FUB1 generates the triketide trans-2-hexenal which is presumptively released by the hydrolase FUB4 and linked to the NRPS-bound amino acid precursor by NAD(P)-dependent dehydrogenase FUB6. FUB1, FUB4, and the non-canonical NRPS Fub8 may form an enzyme complex. Further processing of the NRPS-bound intermediate might be carried out by FUB6 and the sulfhydrylase FUB7, enabling a spontaneous electrocyclization to close the carbon backbone of fusaric acid. Dihydrofusaric acid is likely to be released via reduction by the thioester reductase (TR) domain of FUB8 whereupon the final oxidation to fusaric acid may (also) be performed by the FMN-dependent dehydrogenase FUB9. In Gibberella fujikuroi (strain CBS 195.34 / IMI 58289 / NRRL A-6831) (Bakanae and foot rot disease fungus), this protein is Reducing polyketide synthase FUB1.